Reading from the N-terminus, the 459-residue chain is Bifunctional protein GlmU (459 aa).

Positions 1 to 229 (MTNYAIILAA…FDESLGVNDR (229 aa)) are pyrophosphorylase. UDP-N-acetyl-alpha-D-glucosamine-binding positions include 8–11 (LAAG), Lys22, Gln72, and 77–78 (GT). Residue Asp102 coordinates Mg(2+). 4 residues coordinate UDP-N-acetyl-alpha-D-glucosamine: Gly139, Glu154, Asn169, and Asn227. Asn227 serves as a coordination point for Mg(2+). Positions 230 to 250 (VALAKAEKVMRRRINHAHMVN) are linker. The interval 251–459 (GVTLTNPAST…KKKPHHPNNK (209 aa)) is N-acetyltransferase. 2 residues coordinate UDP-N-acetyl-alpha-D-glucosamine: Arg332 and Lys350. The active-site Proton acceptor is the His362. Tyr365 and Asn376 together coordinate UDP-N-acetyl-alpha-D-glucosamine. Residues Ala379, 385–386 (NY), Ser404, Ala422, and Arg439 contribute to the acetyl-CoA site.

In the N-terminal section; belongs to the N-acetylglucosamine-1-phosphate uridyltransferase family. The protein in the C-terminal section; belongs to the transferase hexapeptide repeat family. In terms of assembly, homotrimer. Mg(2+) serves as cofactor.

Its subcellular location is the cytoplasm. The enzyme catalyses alpha-D-glucosamine 1-phosphate + acetyl-CoA = N-acetyl-alpha-D-glucosamine 1-phosphate + CoA + H(+). It carries out the reaction N-acetyl-alpha-D-glucosamine 1-phosphate + UTP + H(+) = UDP-N-acetyl-alpha-D-glucosamine + diphosphate. It participates in nucleotide-sugar biosynthesis; UDP-N-acetyl-alpha-D-glucosamine biosynthesis; N-acetyl-alpha-D-glucosamine 1-phosphate from alpha-D-glucosamine 6-phosphate (route II): step 2/2. The protein operates within nucleotide-sugar biosynthesis; UDP-N-acetyl-alpha-D-glucosamine biosynthesis; UDP-N-acetyl-alpha-D-glucosamine from N-acetyl-alpha-D-glucosamine 1-phosphate: step 1/1. Its pathway is bacterial outer membrane biogenesis; LPS lipid A biosynthesis. Its function is as follows. Catalyzes the last two sequential reactions in the de novo biosynthetic pathway for UDP-N-acetylglucosamine (UDP-GlcNAc). The C-terminal domain catalyzes the transfer of acetyl group from acetyl coenzyme A to glucosamine-1-phosphate (GlcN-1-P) to produce N-acetylglucosamine-1-phosphate (GlcNAc-1-P), which is converted into UDP-GlcNAc by the transfer of uridine 5-monophosphate (from uridine 5-triphosphate), a reaction catalyzed by the N-terminal domain. In Streptococcus mutans serotype c (strain ATCC 700610 / UA159), this protein is Bifunctional protein GlmU.